Here is a 307-residue protein sequence, read N- to C-terminus: Ribosomal protein L11 methyltransferase (307 aa).

S-adenosyl-L-methionine-binding residues include T162, G183, D205, and N244.

It belongs to the methyltransferase superfamily. PrmA family.

It is found in the cytoplasm. It carries out the reaction L-lysyl-[protein] + 3 S-adenosyl-L-methionine = N(6),N(6),N(6)-trimethyl-L-lysyl-[protein] + 3 S-adenosyl-L-homocysteine + 3 H(+). In terms of biological role, methylates ribosomal protein L11. The polypeptide is Ribosomal protein L11 methyltransferase (Bordetella bronchiseptica (strain ATCC BAA-588 / NCTC 13252 / RB50) (Alcaligenes bronchisepticus)).